We begin with the raw amino-acid sequence, 548 residues long: MAGSNTIDLNPELLAAAAESKAWPFEEAKKIIERYKGGEFPETILFETGYGPSGLPHIGTFGEVARTSMVRHAFRVLTQDKVATKLLCFSDDMDGMRKIPDNVPDRAALEPHLHKPLSSVPNPFGGDYASFADHNNAMLCRFLDTFGFDYEFASATQYYKSGRFDAMLLRAAERYDKIMAVMLPTLGPERQATYSPFLPISPKSGRVLYVPMKHVDAKAGTITFDDEGTETTLSITGGRVKLQWKPDFGMRWAALGVDFEMFGKDHQTNAVVYDRICNILGGRAPEHFVYELFLDENGQKISKSKGNGLTIDEWLTYAPTESLGLYMYQRPRQAKKLYFDVIPRAVDEYYTFLGAYPRQDWKERLGNPVWHMHDGNPPAIDMPVPFSLLLNLVSASNAQNKDVLWGFISRHTQGVTPKTHPELDQLVGHAIRYFDDFVRPTKTFRAADEVEREALEALDAALGALPADAGGEAIQNASLNVARKIERYQDHSKQSPEGGPGVSGAFFQMIYQVLIGQERGPRFGSFAALYGVAETRALIQQALAGQLA.

The short motif at 52–60 (PSGLPHIGT) is the 'HIGH' region element. Positions 300 to 304 (KISKS) match the 'KMSKS' region motif. ATP is bound at residue Lys303.

The protein belongs to the class-I aminoacyl-tRNA synthetase family.

It is found in the cytoplasm. It carries out the reaction tRNA(Lys) + L-lysine + ATP = L-lysyl-tRNA(Lys) + AMP + diphosphate. The chain is Lysine--tRNA ligase from Mesorhizobium japonicum (strain LMG 29417 / CECT 9101 / MAFF 303099) (Mesorhizobium loti (strain MAFF 303099)).